We begin with the raw amino-acid sequence, 154 residues long: uncharacterized protein (154 aa).

Residues Cys4, Cys7, Cys16, Cys19, Cys24, Cys28, His32, and Cys36 each coordinate Zn(2+). Residues 4–36 (CSICNESEIKYKCPKCSFPYCSLPCWKIHQSQC) form an HIT-type zinc finger.

This is an uncharacterized protein from Schizosaccharomyces pombe (strain 972 / ATCC 24843) (Fission yeast).